The primary structure comprises 200 residues: TATA-box-binding protein 2 (200 aa).

2 consecutive repeat copies span residues 25–101 (LQNI…ARII) and 115–192 (IQNI…YPVL).

Belongs to the TBP family. In terms of assembly, belongs to the TFIID complex together with the TBP-associated factors (TAFs). Binds DNA as monomer.

The protein localises to the nucleus. Functionally, general transcription factor that functions at the core of the DNA-binding multiprotein factor TFIID. Binding of TFIID to the TATA box is the initial transcriptional step of the pre-initiation complex (PIC), playing a role in the activation of eukaryotic genes transcribed by RNA polymerase II. In Zea mays (Maize), this protein is TATA-box-binding protein 2 (TBP2).